We begin with the raw amino-acid sequence, 223 residues long: Adenylate kinase (223 aa).

10 to 15 (GSGKGT) serves as a coordination point for ATP. The segment at 30-59 (ESGAIFREHIGGGTELGMKAKGYIDKGELV) is NMP. Residues Ser-31, Arg-36, 57–59 (ELV), 84–87 (GFPR), and Gln-91 contribute to the AMP site. The segment at 125-164 (GRRLCANDPNHPNNIFIDAIKPNGDKCRVCGGDLKTRSDD) is LID. Arg-126 contacts ATP. 2 residues coordinate AMP: Arg-161 and Arg-173. Gly-209 contacts ATP.

The protein belongs to the adenylate kinase family. Monomer.

The protein localises to the cytoplasm. It carries out the reaction AMP + ATP = 2 ADP. Its pathway is purine metabolism; AMP biosynthesis via salvage pathway; AMP from ADP: step 1/1. Catalyzes the reversible transfer of the terminal phosphate group between ATP and AMP. Plays an important role in cellular energy homeostasis and in adenine nucleotide metabolism. The sequence is that of Adenylate kinase from Solidesulfovibrio magneticus (strain ATCC 700980 / DSM 13731 / RS-1) (Desulfovibrio magneticus).